We begin with the raw amino-acid sequence, 234 residues long: Heme-copper oxidase subunit 2 (234 aa).

2 helical membrane passes run 13–33 (LFLL…AFFI) and 72–92 (LLFV…DETL). Cu cation contacts are provided by His151, Cys188, Cys192, and His196.

The protein belongs to the cytochrome c oxidase subunit 2 family.

Its subcellular location is the cell membrane. In Aeropyrum pernix (strain ATCC 700893 / DSM 11879 / JCM 9820 / NBRC 100138 / K1), this protein is Heme-copper oxidase subunit 2 (aoxA).